Here is a 466-residue protein sequence, read N- to C-terminus: 3-isopropylmalate dehydratase large subunit (466 aa).

Positions 345, 405, and 408 each coordinate [4Fe-4S] cluster.

The protein belongs to the aconitase/IPM isomerase family. LeuC type 1 subfamily. As to quaternary structure, heterodimer of LeuC and LeuD. It depends on [4Fe-4S] cluster as a cofactor.

The catalysed reaction is (2R,3S)-3-isopropylmalate = (2S)-2-isopropylmalate. It functions in the pathway amino-acid biosynthesis; L-leucine biosynthesis; L-leucine from 3-methyl-2-oxobutanoate: step 2/4. Its function is as follows. Catalyzes the isomerization between 2-isopropylmalate and 3-isopropylmalate, via the formation of 2-isopropylmaleate. The protein is 3-isopropylmalate dehydratase large subunit of Microcystis aeruginosa (strain NIES-843 / IAM M-2473).